Consider the following 639-residue polypeptide: 3D-(3,5/4)-trihydroxycyclohexane-1,2-dione hydrolase (639 aa).

E62 contacts thiamine diphosphate. The tract at residues 438-518 (SLPGDLQRMW…INILLFDNCG (81 aa)) is thiamine pyrophosphate binding. Positions 489 and 516 each coordinate Mg(2+).

The protein belongs to the TPP enzyme family. It depends on Mg(2+) as a cofactor. The cofactor is thiamine diphosphate.

The catalysed reaction is 3D-3,5/4-trihydroxycyclohexane-1,2-dione + H2O = 5-deoxy-D-glucuronate + H(+). It participates in polyol metabolism; myo-inositol degradation into acetyl-CoA; acetyl-CoA from myo-inositol: step 3/7. Involved in the cleavage of the C1-C2 bond of 3D-(3,5/4)-trihydroxycyclohexane-1,2-dione (THcHDO) to yield 5-deoxy-glucuronate (5DG). This chain is 3D-(3,5/4)-trihydroxycyclohexane-1,2-dione hydrolase, found in Clostridium perfringens (strain 13 / Type A).